A 265-amino-acid polypeptide reads, in one-letter code: Inositol-1-monophosphatase (265 aa).

Mg(2+) contacts are provided by glutamate 69, aspartate 87, isoleucine 89, and aspartate 90. Residue glutamate 69 coordinates substrate. Substrate is bound by residues 89-92 (IDGT), arginine 185, and aspartate 214. Residue aspartate 214 coordinates Mg(2+).

This sequence belongs to the inositol monophosphatase superfamily. Mg(2+) is required as a cofactor.

It carries out the reaction a myo-inositol phosphate + H2O = myo-inositol + phosphate. The enzyme catalyses a ribonucleoside 5'-phosphate + H2O = a ribonucleoside + phosphate. Hydrolyzes myo-inositol monophosphate. Catalyzes the dephosphorylation of GMP and IMP. The chain is Inositol-1-monophosphatase from Bacillus subtilis (strain 168).